The primary structure comprises 107 residues: HTH-type transcriptional regulator Rv2034 (107 aa).

The HTH arsR-type domain maps to 1–93 (MSTYRSPDRA…DLDRFWTRAL (93 aa)). A DNA-binding region (H-T-H motif) is located at residues 33–56 (VGELARDLPVSRPAVSQHLKVLKT).

In terms of assembly, homodimer.

With respect to regulation, DNA-binding ability is not susceptible to zinc, nickel, cobalt, cadmium, lead, copper and manganese ions. Its function is as follows. Involved in the regulation of lipid metabolism and hypoxic response. Positively regulates transcription of various genes, such as phoP, groEL2 and dosR. Negatively regulates its own transcription. Acts by binding to a specific palindromic sequence motif in promoter regions. In Mycobacterium tuberculosis (strain ATCC 25618 / H37Rv), this protein is HTH-type transcriptional regulator Rv2034.